Consider the following 85-residue polypeptide: Putative septation protein SpoVG (85 aa).

Belongs to the SpoVG family.

Its function is as follows. Could be involved in septation. The sequence is that of Putative septation protein SpoVG from Archaeoglobus fulgidus (strain ATCC 49558 / DSM 4304 / JCM 9628 / NBRC 100126 / VC-16).